The sequence spans 412 residues: Glutamate-1-semialdehyde 2,1-aminomutase (412 aa).

An N6-(pyridoxal phosphate)lysine modification is found at lysine 260.

The protein belongs to the class-III pyridoxal-phosphate-dependent aminotransferase family. HemL subfamily. Pyridoxal 5'-phosphate serves as cofactor.

The protein resides in the cytoplasm. It catalyses the reaction (S)-4-amino-5-oxopentanoate = 5-aminolevulinate. It functions in the pathway porphyrin-containing compound metabolism; protoporphyrin-IX biosynthesis; 5-aminolevulinate from L-glutamyl-tRNA(Glu): step 2/2. This is Glutamate-1-semialdehyde 2,1-aminomutase from Methanocorpusculum labreanum (strain ATCC 43576 / DSM 4855 / Z).